The primary structure comprises 83 residues: Short neurotoxin 3FTx-Oxy4 (83 aa).

Residues 1 to 21 (MKTLLLTLVVVTIVCLDLGYT) form the signal peptide. Disulfide bonds link Cys24-Cys45, Cys38-Cys62, Cys64-Cys75, and Cys76-Cys81.

Belongs to the three-finger toxin family. Short-chain subfamily. Type I alpha-neurotoxin sub-subfamily. As to expression, expressed by the venom gland.

It is found in the secreted. Functionally, binds to muscle nicotinic acetylcholine receptor (nAChR) and inhibit acetylcholine from binding to the receptor, thereby impairing neuromuscular transmission. This is Short neurotoxin 3FTx-Oxy4 from Oxyuranus microlepidotus (Inland taipan).